The sequence spans 339 residues: Centromere protein N (339 aa).

Phosphoserine is present on residues Ser-226 and Ser-235.

The protein belongs to the CENP-N/CHL4 family. In terms of assembly, component of the CENPA-NAC complex, at least composed of CENPA, CENPC, CENPH, CENPM, CENPN, CENPT and CENPU. The CENPA-NAC complex interacts with the CENPA-CAD complex, composed of CENPI, CENPK, CENPL, CENPO, CENPP, CENPQ, CENPR and CENPS. Interacts directly with CENPA. Identified in a centromere complex containing histones H2A, H2B and H4, and at least CENPA, CENPB, CENPC, CENPT, CENPN, HJURP, SUPT16H, SSRP1 and RSF1.

The protein resides in the nucleus. It localises to the chromosome. It is found in the centromere. The protein localises to the kinetochore. In terms of biological role, component of the CENPA-NAC (nucleosome-associated) complex, a complex that plays a central role in assembly of kinetochore proteins, mitotic progression and chromosome segregation. The CENPA-NAC complex recruits the CENPA-CAD (nucleosome distal) complex and may be involved in incorporation of newly synthesized CENPA into centromeres. CENPN is the first protein to bind specifically to CENPA nucleosomes and the direct binding of CENPA nucleosomes by CENPN is required for centromere assembly. Required for chromosome congression and efficiently align the chromosomes on a metaphase plate. This chain is Centromere protein N (CENPN), found in Bos taurus (Bovine).